We begin with the raw amino-acid sequence, 1483 residues long: Heme-responsive zinc finger transcription factor HAP1 (1483 aa).

A compositionally biased stretch (polar residues) spans 1–50 (MSNTPYNSSVPSIASMTQSSVSRSPNMHTATTPGANTSSNSPPLHMSSDS). The tract at residues 1-56 (MSNTPYNSSVPSIASMTQSSVSRSPNMHTATTPGANTSSNSPPLHMSSDSSKIKRK) is disordered. Zn(2+)-binding residues include C64, C67, C74, C81, C84, and C93. Positions 64-93 (CTICRKRKVKCDKLRPHCQQCTKTGVAHLC) form a DNA-binding region, zn(2)-C6 fungal-type. A coiled-coil region spans residues 105–134 (EKELLKDNELKKLRERVKSLEKTLSKVHSS). The interval 126–208 (KTLSKVHSSP…ANSSSLSISN (83 aa)) is disordered. Residues 130–142 (KVHSSPSSNSLKS) show a composition bias toward low complexity. Composition is skewed to polar residues over residues 143-152 (YNTPESSNLF) and 160-176 (TLVN…SHMH). A compositionally biased stretch (low complexity) spans 177-208 (QQQQQQQQQEQQQDFSRSANANANSSSLSISN). Positions 244-444 (KGDPYLKLLW…NTIPHHQPQS (201 aa)) are heme-responsive; required for HMC formation. HRM repeat units follow at residues 280–285 (KCPINH), 299–304 (KCPVDH), 323–328 (KCPVDH), 347–352 (RCPVDH), 389–394 (KCPVDH), and 415–420 (RCPIDH). Polar residues-rich tracts occupy residues 432 to 447 (STHN…SGSH) and 706 to 734 (QLNA…NPTL). Disordered regions lie at residues 432 to 458 (STHN…NRKH) and 706 to 767 (QLNA…KENQ). A compositionally biased stretch (low complexity) spans 735–759 (NNNMSAATTNSSSRSGSADSRSGSN). The HRM 7 repeat unit spans residues 1192–1197 (KCPVYQ).

As to quaternary structure, binds DNA as a homodimer. Interacts with SRO9 and YDJ1. In the absence of heme, binds to at least four cellular proteins, including YDJ1 and SRO9, forming a high-molecular-weight complex (HMC) which results in repression of its activity and dictates its DNA-binding specificity.

The protein localises to the nucleus. Functionally, regulation of oxygen dependent gene expression. It modulates the expression of Iso-1 (CYP1) and Iso-2 (CYP3) cytochrome c. In response to heme, promotes transcription of genes encoding functions required for respiration, controlling oxidative damage and repression of anaerobic genes. Binds to the sequence 5'-CGGNNNTNNCGG-3'. The sequence is that of Heme-responsive zinc finger transcription factor HAP1 (HAP1) from Saccharomyces cerevisiae (strain Lalvin EC1118 / Prise de mousse) (Baker's yeast).